A 406-amino-acid polypeptide reads, in one-letter code: Digeranylgeranylglycerophospholipid reductase 2 (406 aa).

10 residues coordinate FAD: glycine 15, glutamate 34, cysteine 45, alanine 46, glycine 48, arginine 99, alanine 123, aspartate 279, glycine 291, and isoleucine 292.

It belongs to the geranylgeranyl reductase family. DGGGPL reductase subfamily. It depends on FAD as a cofactor.

The enzyme catalyses a 2,3-bis-O-phytanyl-sn-glycerol 1-phospholipid + 8 oxidized 2[4Fe-4S]-[ferredoxin] = a 2,3-bis-O-(geranylgeranyl)-sn-glycerol 1-phospholipid + 8 reduced 2[4Fe-4S]-[ferredoxin] + 16 H(+). The catalysed reaction is 2,3-bis-O-(phytanyl)-sn-glycerol 1-phosphate + 8 oxidized 2[4Fe-4S]-[ferredoxin] = 2,3-bis-O-(geranylgeranyl)-sn-glycerol 1-phosphate + 8 reduced 2[4Fe-4S]-[ferredoxin] + 16 H(+). It carries out the reaction a 2,3-bis-O-phytanyl-sn-glycerol 1-phospholipid + 8 A = a 2,3-bis-O-(geranylgeranyl)-sn-glycerol 1-phospholipid + 8 AH2. It catalyses the reaction CDP-2,3-bis-O-(geranylgeranyl)-sn-glycerol + 8 AH2 = CDP-2,3-bis-O-(phytanyl)-sn-glycerol + 8 A. The enzyme catalyses archaetidylserine + 8 AH2 = 2,3-bis-O-phytanyl-sn-glycero-3-phospho-L-serine + 8 A. Its pathway is membrane lipid metabolism; glycerophospholipid metabolism. In terms of biological role, is involved in the reduction of 2,3-digeranylgeranylglycerophospholipids (unsaturated archaeols) into 2,3-diphytanylglycerophospholipids (saturated archaeols) in the biosynthesis of archaeal membrane lipids. Catalyzes the formation of archaetidic acid (2,3-di-O-phytanyl-sn-glyceryl phosphate) from 2,3-di-O-geranylgeranylglyceryl phosphate (DGGGP) via the hydrogenation of each double bond of the isoprenoid chains. Is also probably able to reduce double bonds of geranyl groups in CDP-2,3-bis-O-(geranylgeranyl)-sn-glycerol and archaetidylserine, thus acting at various stages in the biosynthesis of archaeal membrane lipids. The protein is Digeranylgeranylglycerophospholipid reductase 2 of Methanococcoides burtonii (strain DSM 6242 / NBRC 107633 / OCM 468 / ACE-M).